The following is a 240-amino-acid chain: Histidinol dehydrogenase homolog oryD (240 aa).

2 residues coordinate Zn(2+): Gln64 and His67. Residue Glu134 is the Proton acceptor of the active site. Residues Asp168 and His228 each coordinate Zn(2+).

Belongs to the histidinol dehydrogenase family. The cofactor is Zn(2+).

It participates in secondary metabolite biosynthesis. In terms of biological role, histidinol dehydrogenase homolog; part of the gene cluster that mediates the biosynthesis of oryzines, natural products with an unusual maleidride backbone. The two subunits of the fungal fatty acid synthase oryfasA and oryfasB probably form octenoic acid. This fatty acid is most likely activated by the acyl-CoA ligase oryP to give octenyl-CoA before the citrate synthase-like protein oryE catalyzes condensation with oxaloacetate to form tricarboxylic acid. The next steps of the pathways are conjectural, but a favorite possible route has been proposed, beginning with decarboxylation and concomitant dehydration by the decarboxylase oryM, followed by tautomerization, which may lead to the production of a diene intermediate. Reduction of this diene intermediate could give the known metabolite piliformic acid. On the pathway to oryzine B and oryzine A, however, hydroxylation of the diene by the alpha-ketoglutarate-dependent dioxygenase oryG and lactonisation by the lactonohydrolases oryH or oryL could give oryzine B directly. Finally, enoyl reduction by the dehydrogenase oryD would then convert oryzine B into oryzine A. This is Histidinol dehydrogenase homolog oryD from Aspergillus oryzae (strain ATCC 42149 / RIB 40) (Yellow koji mold).